Consider the following 386-residue polypeptide: TRIBOA-glucoside O-methyltransferase BX7 (386 aa).

S-adenosyl-L-methionine is bound by residues G224, D248, M270, and K283. The active-site Proton acceptor is H287.

This sequence belongs to the class I-like SAM-binding methyltransferase superfamily. Cation-independent O-methyltransferase family. COMT subfamily. Expressed in seedlings and newly formed crown roots. Highest expression in the scutellar node. Low to non detectable levels in cob, tassel and mature organs like husk or leaves.

It carries out the reaction TRIBOA beta-D-glucoside + S-adenosyl-L-methionine = DIMBOA beta-D-glucoside + S-adenosyl-L-homocysteine + H(+). Its function is as follows. O-methyltransferase involved in the benzoxazinoid glucoside biosynthesis. Can use 2,4,7-trihydroxy-2H-1,4-benzoxazin-3(4H)-one 2-D-glucoside (TRIBOA-glucoside) as substrate, but not aglucone TRIBOA, caffeic acid, ferulic acid, apigenin or quercetin. In Zea mays (Maize), this protein is TRIBOA-glucoside O-methyltransferase BX7 (BX7).